The chain runs to 493 residues: EGF-containing fibulin-like extracellular matrix protein 1 (493 aa).

Residues 1–17 form the signal peptide; the sequence is MLQTLFLTMLTLALVKS. One can recognise an EGF-like 1; atypical domain in the interval 26–71; the sequence is YTQCTDGYEWDPIRQQCKDIDECDIVPDACKGGMKCVNHYGGYLCL. An EGF-like 2; calcium-binding domain is found at 173-213; sequence DIDECTSGTHNCRTDQVCINLRGSFTCQCLPGYQKRGEQCV. 15 cysteine pairs are disulfide-bonded: cysteine 177/cysteine 190, cysteine 184/cysteine 199, cysteine 201/cysteine 212, cysteine 218/cysteine 228, cysteine 224/cysteine 237, cysteine 239/cysteine 252, cysteine 258/cysteine 268, cysteine 264/cysteine 277, cysteine 279/cysteine 292, cysteine 298/cysteine 309, cysteine 305/cysteine 318, cysteine 320/cysteine 332, cysteine 338/cysteine 350, cysteine 344/cysteine 359, and cysteine 365/cysteine 377. One can recognise an EGF-like 3; calcium-binding domain in the interval 214-253; that stretch reads DIDECTVPPYCHQRCVNTPGSFYCQCSPGFQLAANNYTCV. Asparagine 249 carries an N-linked (GlcNAc...) asparagine glycan. Residues 254–293 form the EGF-like 4; calcium-binding domain; that stretch reads DINECDASNQCAQQCYNILGSFICQCNQGYELSSDRLNCE. Positions 259–493 are mediates interaction with TIMP3; it reads DASNQCAQQC…LTIIVGPFSF (235 aa). An EGF-like 5; calcium-binding domain is found at 294-333; that stretch reads DIDECRTSSYLCQYQCVNEPGKFSCMCPQGYEVVRSRTCQ. Residues 334–378 form the EGF-like 6; calcium-binding domain; that stretch reads DINECETTNECREDEMCWNYHGGFRCYPRNPCQDHYVLTSENRCV.

The protein belongs to the fibulin family. Interacts with ECM1. Interacts with TIMP3. Expressed in the eye in the ciliary body, cornea, inner nuclear layer of the retina, and in the optic disk.

The protein localises to the secreted. It localises to the extracellular space. It is found in the extracellular matrix. Its function is as follows. Binds EGFR, the EGF receptor, inducing EGFR autophosphorylation and the activation of downstream signaling pathways. May play a role in cell adhesion and migration. May function as a negative regulator of chondrocyte differentiation. In the olfactory epithelium, it may regulate glial cell migration, differentiation and the ability of glial cells to support neuronal neurite outgrowth. This chain is EGF-containing fibulin-like extracellular matrix protein 1 (Efemp1), found in Mus musculus (Mouse).